The chain runs to 211 residues: Prolactin-1 (211 aa).

The N-terminal stretch at 1–23 is a signal peptide; that stretch reads MARRSQGTKLHLAVLCLVVSCHA. Disulfide bonds link Cys69/Cys184 and Cys201/Cys211.

It belongs to the somatotropin/prolactin family.

The protein localises to the secreted. The chain is Prolactin-1 (prl1) from Oncorhynchus keta (Chum salmon).